The primary structure comprises 439 residues: Glucan 1,3-beta-glucosidase (439 aa).

The signal sequence occupies residues 1–18 (MLLSLLFLLSTFAFGALT). Glu227 functions as the Proton donor in the catalytic mechanism. Intrachain disulfides connect Cys311/Cys437 and Cys336/Cys366. The active-site Nucleophile is Glu328.

Belongs to the glycosyl hydrolase 5 (cellulase A) family.

Its subcellular location is the secreted. It catalyses the reaction Successive hydrolysis of beta-D-glucose units from the non-reducing ends of (1-&gt;3)-beta-D-glucans, releasing alpha-glucose.. In terms of biological role, beta-glucanases participate in the metabolism of beta-glucan, the main structural component of the cell wall. It could also function biosynthetically as a transglycosylase. The chain is Glucan 1,3-beta-glucosidase (EXG1) from Lachancea kluyveri (strain ATCC 58438 / CBS 3082 / BCRC 21498 / NBRC 1685 / JCM 7257 / NCYC 543 / NRRL Y-12651) (Yeast).